A 195-amino-acid polypeptide reads, in one-letter code: MGCTRDAILDALENLTADELKKFKMKLLSVPLREGYGRIPRGTLLPLDAVDLTDKLVSYYLEAYGAELTALVLRDMGMQEVAEQLQETMSKGPRNVLAEVRDPLQKTAKPGLHFVDQHRAALIARVTVVDGVLDALYGKVLTEEQYQAVRAERTSSDKMRKLFSFSPAWNMTCKDLLLQALRDTQPYLVDDLEQS.

In terms of domain architecture, Pyrin spans 1-91 (MGCTRDAILD…AEQLQETMSK (91 aa)). Glycyl lysine isopeptide (Lys-Gly) (interchain with G-Cter in ubiquitin) cross-links involve residues Lys-55 and Lys-174. Residues 107–195 (TAKPGLHFVD…PYLVDDLEQS (89 aa)) enclose the CARD domain. Ser-195 carries the post-translational modification Phosphoserine.

In terms of assembly, self-associates; enforced oligomerization induces apoptosis, NF-kappa-B regulation and interleukin-1 beta secretion. Homooligomers can form disk-like particles of approximately 12 nm diameter and approximately 1 nm height. Component of several inflammasomes containing one pattern recognition receptor/sensor, such as NLRP1, NLRP2, NLRP3, NLRP6, NLRC4, AIM2, MEFV or NOD2, and probably NLRC4 or NLRP12. Major component of the ASC pyroptosome, a 1-2 um supramolecular assembly (one per macrophage cell) which consists of oligomerized PYCARD dimers and CASP1. Interacts with CASP1 (precursor form); the interaction induces activation of CASP1 leading to the processing of interleukin-1 beta; PYCARD competes with RIPK2 for binding to CASP1. Interacts with NLRP3; the interaction requires the homooligomerization of NLRP3. Interacts with NLRP2, NLRC4, MEFV, CARD16, AIM2, NOD2, RIGI, RIPK2, PYDC1, PYDC2, NLRP10, CASP8, CHUK, IKBKB and BAX. Component of the AIM2 PANoptosome complex, a multiprotein complex that drives inflammatory cell death (PANoptosis). Phosphorylated. Post-translationally, 'Lys-63'-linked polyubiquitination by TRAF3 is critical for speck formation and inflammasome activation. 'Lys-63'-linked deubiquitinated by USP50; a crucial step for NLRP3-mediated inflammasome activation. 'Lys-63'-linked polyubiquitination by PELI1 is also critical for speck formation and inflammasome activation. Deubiquitinated by USP3 that cleaves 'Lys-48'-linked ubiquitin chains and strengthens its stability by blocking proteasomal degradation.

It localises to the cytoplasm. Its subcellular location is the inflammasome. The protein localises to the endoplasmic reticulum. The protein resides in the mitochondrion. It is found in the nucleus. Functions as a key mediator in apoptosis and inflammation. Promotes caspase-mediated apoptosis involving predominantly caspase-8 and also caspase-9 in a probable cell type-specific manner. Involved in activation of the mitochondrial apoptotic pathway, promotes caspase-8-dependent proteolytic maturation of BID independently of FADD in certain cell types and also mediates mitochondrial translocation of BAX and activates BAX-dependent apoptosis coupled to activation of caspase-9, -2 and -3. Involved in innate immune response by acting as an integral adapter in the assembly of various inflammasomes (NLRP2, NLRP3, NLRP6 and AIM2) which recruit and activate caspase-1 leading to processing and secretion of pro-inflammatory cytokines. Caspase-1-dependent inflammation leads to macrophage pyroptosis, a form of cell death. The function as activating adapter in different types of inflammasomes is mediated by the pyrin and CARD domains and their homotypic interactions. Clustered PYCARD nucleates the formation of caspase-1 filaments through the interaction of their respective CARD domains, acting as a platform for of caspase-1 polymerization. In the NLRC4 inflammasomes seems not be required but facilitates the processing of procaspase-1. In cooperation with NOD2 involved in an inflammasome activated by bacterial muramyl dipeptide leading to caspase-1 activation. May be involved in RIGI-triggered pro-inflammatory responses and inflammasome activation. In collaboration with AIM2 which detects cytosolic double-stranded DNA may also be involved in a caspase-1-independent cell death that involves caspase-8. In adaptive immunity may be involved in maturation of dendritic cells to stimulate T-cell immunity and in cytoskeletal rearrangements coupled to chemotaxis and antigen uptake may be involved in post-transcriptional regulation of the guanine nucleotide exchange factor DOCK2; the latter function is proposed to involve the nuclear form. Also involved in transcriptional activation of cytokines and chemokines independent of the inflammasome; this function may involve AP-1, NF-kappa-B, MAPK and caspase-8 signaling pathways. For regulation of NF-kappa-B activating and inhibiting functions have been reported. Modulates NF-kappa-B induction at the level of the IKK complex by inhibiting kinase activity of CHUK and IKBK. Proposed to compete with RIPK2 for association with CASP1 thereby down-regulating CASP1-mediated RIPK2-dependent NF-kappa-B activation and activating interleukin-1 beta processing. Modulates host resistance to DNA virus infection, probably by inducing the cleavage of and inactivating CGAS in presence of cytoplasmic double-stranded DNA. In Bos taurus (Bovine), this protein is Apoptosis-associated speck-like protein containing a CARD (PYCARD).